The chain runs to 430 residues: Adenylosuccinate synthetase (430 aa).

GTP-binding positions include 12–18 and 40–42; these read GDEGKGK and GHT. Asp-13 acts as the Proton acceptor in catalysis. Asp-13 and Gly-40 together coordinate Mg(2+). IMP-binding positions include 13-16, 38-41, Thr-128, Arg-142, Gln-223, Thr-238, and Arg-302; these read DEGK and NAGH. His-41 serves as the catalytic Proton donor. Substrate is bound at residue 298-304; sequence TTTGRPR. Residues Arg-304, 330–332, and 412–414 contribute to the GTP site; these read SID and SVG.

The protein belongs to the adenylosuccinate synthetase family. As to quaternary structure, homodimer. Mg(2+) serves as cofactor.

It localises to the cytoplasm. It catalyses the reaction IMP + L-aspartate + GTP = N(6)-(1,2-dicarboxyethyl)-AMP + GDP + phosphate + 2 H(+). It functions in the pathway purine metabolism; AMP biosynthesis via de novo pathway; AMP from IMP: step 1/2. Functionally, plays an important role in the de novo pathway of purine nucleotide biosynthesis. Catalyzes the first committed step in the biosynthesis of AMP from IMP. The polypeptide is Adenylosuccinate synthetase (Streptococcus sanguinis (strain SK36)).